A 92-amino-acid polypeptide reads, in one-letter code: Large ribosomal subunit protein bL25 (92 aa).

It belongs to the bacterial ribosomal protein bL25 family. Part of the 50S ribosomal subunit; part of the 5S rRNA/L5/L18/L25 subcomplex. Contacts the 5S rRNA. Binds to the 5S rRNA independently of L5 and L18.

In terms of biological role, this is one of the proteins that binds to the 5S RNA in the ribosome where it forms part of the central protuberance. In Vibrio parahaemolyticus serotype O3:K6 (strain RIMD 2210633), this protein is Large ribosomal subunit protein bL25.